Reading from the N-terminus, the 417-residue chain is Blood group Rh(D) polypeptide (417 aa).

11 helical membrane passes run 12 to 32, 44 to 64, 77 to 97, 107 to 127, 130 to 150, 167 to 187, 203 to 223, 238 to 258, 287 to 307, 334 to 354, and 358 to 378; these read CLPL…YFFT, LVAS…GLGF, VAFN…LDGF, VITL…LISV, VLGK…VTAL, MNMM…AWCL, TIPS…WPSF, VFNT…GSSL, LIPS…ISVG, LLGL…TVGA, and MIGF…VIAL.

It belongs to the ammonium transporter (TC 2.A.49) family. Rh subfamily. Post-translationally, palmitoylated. Restricted to tissues or cell lines expressing erythroid characters.

Its subcellular location is the cell membrane. In terms of biological role, may be part of an oligomeric complex which is likely to have a transport or channel function in the erythrocyte membrane. This chain is Blood group Rh(D) polypeptide (RHD), found in Homo sapiens (Human).